An 89-amino-acid chain; its full sequence is Small ribosomal subunit protein uS15 (89 aa).

This sequence belongs to the universal ribosomal protein uS15 family. In terms of assembly, part of the 30S ribosomal subunit. Forms a bridge to the 50S subunit in the 70S ribosome, contacting the 23S rRNA.

Its function is as follows. One of the primary rRNA binding proteins, it binds directly to 16S rRNA where it helps nucleate assembly of the platform of the 30S subunit by binding and bridging several RNA helices of the 16S rRNA. Forms an intersubunit bridge (bridge B4) with the 23S rRNA of the 50S subunit in the ribosome. The protein is Small ribosomal subunit protein uS15 of Streptococcus mutans serotype c (strain ATCC 700610 / UA159).